Reading from the N-terminus, the 230-residue chain is Cytochrome c oxidase subunit 2 (230 aa).

Topologically, residues 1 to 14 are mitochondrial intermembrane; that stretch reads MAHPSQLGFQDAAS. Residues 15–45 traverse the membrane as a helical segment; sequence PVMEELLHFHDHALMIVLLISTLVLYIIVAM. The Mitochondrial matrix segment spans residues 46–59; the sequence is VSTKLTNKYILDSQ. Residues 60–87 form a helical membrane-spanning segment; it reads EIEIVWTVLPAVILILIALPSLRILYLM. Residues 88-230 are Mitochondrial intermembrane-facing; that stretch reads DEINDPHLTI…KWSTMMLEDA (143 aa). Residues histidine 161, cysteine 196, glutamate 198, cysteine 200, histidine 204, and methionine 207 each contribute to the Cu cation site. Glutamate 198 lines the Mg(2+) pocket.

This sequence belongs to the cytochrome c oxidase subunit 2 family. As to quaternary structure, component of the cytochrome c oxidase (complex IV, CIV), a multisubunit enzyme composed of 14 subunits. The complex is composed of a catalytic core of 3 subunits MT-CO1, MT-CO2 and MT-CO3, encoded in the mitochondrial DNA, and 11 supernumerary subunits COX4I, COX5A, COX5B, COX6A, COX6B, COX6C, COX7A, COX7B, COX7C, COX8 and NDUFA4, which are encoded in the nuclear genome. The complex exists as a monomer or a dimer and forms supercomplexes (SCs) in the inner mitochondrial membrane with NADH-ubiquinone oxidoreductase (complex I, CI) and ubiquinol-cytochrome c oxidoreductase (cytochrome b-c1 complex, complex III, CIII), resulting in different assemblies (supercomplex SCI(1)III(2)IV(1) and megacomplex MCI(2)III(2)IV(2)). Found in a complex with TMEM177, COA6, COX18, COX20, SCO1 and SCO2. Interacts with TMEM177 in a COX20-dependent manner. Interacts with COX20. Interacts with COX16. Requires Cu cation as cofactor.

It localises to the mitochondrion inner membrane. The catalysed reaction is 4 Fe(II)-[cytochrome c] + O2 + 8 H(+)(in) = 4 Fe(III)-[cytochrome c] + 2 H2O + 4 H(+)(out). In terms of biological role, component of the cytochrome c oxidase, the last enzyme in the mitochondrial electron transport chain which drives oxidative phosphorylation. The respiratory chain contains 3 multisubunit complexes succinate dehydrogenase (complex II, CII), ubiquinol-cytochrome c oxidoreductase (cytochrome b-c1 complex, complex III, CIII) and cytochrome c oxidase (complex IV, CIV), that cooperate to transfer electrons derived from NADH and succinate to molecular oxygen, creating an electrochemical gradient over the inner membrane that drives transmembrane transport and the ATP synthase. Cytochrome c oxidase is the component of the respiratory chain that catalyzes the reduction of oxygen to water. Electrons originating from reduced cytochrome c in the intermembrane space (IMS) are transferred via the dinuclear copper A center (CU(A)) of subunit 2 and heme A of subunit 1 to the active site in subunit 1, a binuclear center (BNC) formed by heme A3 and copper B (CU(B)). The BNC reduces molecular oxygen to 2 water molecules using 4 electrons from cytochrome c in the IMS and 4 protons from the mitochondrial matrix. This chain is Cytochrome c oxidase subunit 2 (mt-co2), found in Salmo salar (Atlantic salmon).